Here is a 117-residue protein sequence, read N- to C-terminus: Fluoride-specific ion channel FluC 2 (117 aa).

A run of 2 helical transmembrane segments spans residues 1–21 and 46–66; these read MISI…RSAI and FLIG…AFFV. 2 residues coordinate Na(+): glycine 71 and threonine 74. A helical transmembrane segment spans residues 95–115; the sequence is LFLNYSLLQFIIGFIACYIGY.

Belongs to the fluoride channel Fluc/FEX (TC 1.A.43) family.

The protein resides in the cell membrane. The catalysed reaction is fluoride(in) = fluoride(out). With respect to regulation, na(+) is not transported, but it plays an essential structural role and its presence is essential for fluoride channel function. Fluoride-specific ion channel. Important for reducing fluoride concentration in the cell, thus reducing its toxicity. The protein is Fluoride-specific ion channel FluC 2 of Staphylococcus aureus (strain NCTC 8325 / PS 47).